An 86-amino-acid chain; its full sequence is Candiduxin-2 (86 aa).

An N-terminal signal peptide occupies residues 1 to 21 (MKTLLLTLVVLTIACLDLGYT). 4 disulfide bridges follow: Cys-24-Cys-45, Cys-38-Cys-62, Cys-66-Cys-78, and Cys-79-Cys-84.

The protein belongs to the three-finger toxin family. Short-chain subfamily. Orphan group IX sub-subfamily. As to expression, expressed by the venom gland.

It is found in the secreted. This is Candiduxin-2 from Bungarus candidus (Malayan krait).